A 763-amino-acid chain; its full sequence is Serine/threonine-protein kinase PknG (763 aa).

The segment at 1-32 (MKREHMDHDTEDVGQAAQRADPPSGTTEGRLQ) is disordered. The region spanning 160-406 (YEVKGCIAHG…SAEEMSAQLM (247 aa)) is the Protein kinase domain. ATP is bound by residues 166–174 (IAHGGLGWV) and Lys190. Catalysis depends on Asp289, which acts as the Proton acceptor.

This sequence belongs to the protein kinase superfamily. Ser/Thr protein kinase family. Post-translationally, autophosphorylated.

It carries out the reaction L-seryl-[protein] + ATP = O-phospho-L-seryl-[protein] + ADP + H(+). The enzyme catalyses L-threonyl-[protein] + ATP = O-phospho-L-threonyl-[protein] + ADP + H(+). The protein is Serine/threonine-protein kinase PknG (pknG) of Mycobacterium leprae (strain TN).